Consider the following 107-residue polypeptide: UPF0122 protein EAT1b_2891 (107 aa).

This sequence belongs to the UPF0122 family.

Its function is as follows. Might take part in the signal recognition particle (SRP) pathway. This is inferred from the conservation of its genetic proximity to ftsY/ffh. May be a regulatory protein. The polypeptide is UPF0122 protein EAT1b_2891 (Exiguobacterium sp. (strain ATCC BAA-1283 / AT1b)).